Here is a 40-residue protein sequence, read N- to C-terminus: Neutral phospholipase A2 homolog cannitoxin beta chain 2 (40 aa).

Heterotrimer of alpha, beta, and gamma chains; non-covalently linked. In terms of tissue distribution, expressed by the venom gland.

The protein localises to the secreted. In terms of biological role, heterotrimer: Snake venom phospholipase A2 (PLA2) heterotrimer that acts as a potent presynaptic neurotoxin by blocking synaptic transmission and synaptic vesicle recycling. Enzymatic activity is essential for the neurotoxic effects. May act by binding in a calcium-dependent fashion to neurotonal pentraxin-1 (NPTX1) and neurotonal pentraxin-2 (NPTX2), but not to neuronal pentraxin receptor (NPTXR). Also binds to taipoxin-associated calcium binding protein 49 (RCN2), a protein localized in the lumen of endoplasmic reticulum. Functionally, monomer (beta chain): Snake venom phospholipase A2 homolog that is neither toxic nor enzymatically active. Does not bind calcium. This Oxyuranus scutellatus canni (Papuan taipan) protein is Neutral phospholipase A2 homolog cannitoxin beta chain 2.